A 215-amino-acid polypeptide reads, in one-letter code: Somatotropin (215 aa).

An N-terminal signal peptide occupies residues Met-1–Ala-25. Position 44 (His-44) interacts with Zn(2+). Phosphoserine is present on Ser-130. Glu-197 contacts Zn(2+).

It belongs to the somatotropin/prolactin family.

The protein resides in the secreted. Plays an important role in growth control. Its major role in stimulating body growth is to stimulate the liver and other tissues to secrete IGF1. It stimulates both the differentiation and proliferation of myoblasts. It also stimulates amino acid uptake and protein synthesis in muscle and other tissues. This is Somatotropin (GH1) from Monodelphis domestica (Gray short-tailed opossum).